A 133-amino-acid polypeptide reads, in one-letter code: MIIGLGSDLCNIERIQNSLDRFGERFENRVFTEIERAKARRRPFTIAGTYAKRFAAKEAFSKAVGTGFRRGVFMKDIGVVNARSGAPTLALTGGAAIRLAELLPDGHEASIHLTLTDDHPWAQAFVIIEAHRI.

Mg(2+) is bound by residues aspartate 8 and glutamate 58.

The protein belongs to the P-Pant transferase superfamily. AcpS family. It depends on Mg(2+) as a cofactor.

It localises to the cytoplasm. The enzyme catalyses apo-[ACP] + CoA = holo-[ACP] + adenosine 3',5'-bisphosphate + H(+). In terms of biological role, transfers the 4'-phosphopantetheine moiety from coenzyme A to a Ser of acyl-carrier-protein. This chain is Holo-[acyl-carrier-protein] synthase, found in Erythrobacter litoralis (strain HTCC2594).